A 310-amino-acid chain; its full sequence is Fe-S cluster assembly protein dre2 (310 aa).

An N-terminal SAM-like domain region spans residues 1–130; that stretch reads MSGRTLLLSP…KPDIEDMRAV (130 aa). Residues 131 to 203 form a linker region; the sequence is PLRLGRKKHD…EDLLDGSELA (73 aa). 4 residues coordinate [2Fe-2S] cluster: Cys-212, Cys-223, Cys-226, and Cys-228. Residues 212–228 are fe-S binding site A; it reads CRPKAGRRRRACKDCTC. [4Fe-4S] cluster is bound by residues Cys-273, Cys-276, Cys-284, and Cys-287. Short sequence motifs (cx2C motif) lie at residues 273–276 and 284–287; these read CGNC and CEGC. A fe-S binding site B region spans residues 273–287; that stretch reads CGNCSLGDAFRCEGC.

It belongs to the anamorsin family. As to quaternary structure, monomer. Interacts with tah18. Interacts with mia40. The cofactor is [2Fe-2S] cluster. Requires [4Fe-4S] cluster as cofactor.

It is found in the cytoplasm. It localises to the mitochondrion intermembrane space. In terms of biological role, component of the cytosolic iron-sulfur (Fe-S) protein assembly (CIA) machinery required for the maturation of extramitochondrial Fe-S proteins. Part of an electron transfer chain functioning in an early step of cytosolic Fe-S biogenesis, facilitating the de novo assembly of a [4Fe-4S] cluster on the scaffold complex cfd1-nbp35. Electrons are transferred to dre2 from NADPH via the FAD- and FMN-containing protein tah18. Tah18-dre2 are also required for the assembly of the diferric tyrosyl radical cofactor of ribonucleotide reductase (RNR), probably by providing electrons for reduction during radical cofactor maturation in the catalytic small subunit rnr2. This is Fe-S cluster assembly protein dre2 from Aspergillus clavatus (strain ATCC 1007 / CBS 513.65 / DSM 816 / NCTC 3887 / NRRL 1 / QM 1276 / 107).